Reading from the N-terminus, the 657-residue chain is Pentatricopeptide repeat-containing protein At1g11710, mitochondrial (657 aa).

The transit peptide at 1–74 (MFGHVFSRRT…REFRSSPKLA (74 aa)) directs the protein to the mitochondrion. 14 PPR repeats span residues 147-181 (SPDV…GFCV), 182-216 (SVHA…GYVE), 217-251 (NVNT…GVWP), 252-282 (NVVS…MGMM), 290-324 (NAVT…GVDC), 325-359 (NERT…GLVV), 360-394 (NTVI…NMQI), 395-429 (DRFT…KLVE), 430-464 (DIVC…GLSL), 465-499 (DAIS…NKTS), 500-530 (NLVI…MEIK), 531-565 (DIVT…DGEK), 568-602 (SLVT…GVVP), and 603-637 (DSIT…GVTP).

The protein belongs to the PPR family. P subfamily.

Its subcellular location is the mitochondrion. The polypeptide is Pentatricopeptide repeat-containing protein At1g11710, mitochondrial (Arabidopsis thaliana (Mouse-ear cress)).